A 702-amino-acid polypeptide reads, in one-letter code: MADS-box MEF2 type transcription factor MIG1 (702 aa).

Positions 1 to 61 (MGRRKIEIKA…KKLYEYSSGD (61 aa)) constitute an MADS-box domain. Disordered stretches follow at residues 73-608 (GGAT…NIDT) and 658-702 (PSFL…KVDS). Over residues 86 to 96 (GGDDDDEEEGD) the composition is skewed to acidic residues. Residues 132 to 144 (ASPPIPNGVPFPP) are compositionally biased toward pro residues. A compositionally biased stretch (low complexity) spans 145-155 (HGHGVPRGHTP). Positions 180–195 (GSPQVNGFGFGQQQSM) are enriched in polar residues. Positions 201–241 (TTMPPHMPPQMAPGPPFPYPQHPQHPPHPPHPPHPPHPQQP) are enriched in pro residues. Low complexity-rich tracts occupy residues 273–284 (PMGMQRHSVSPP), 326–343 (ESPQ…QQPE), and 350–371 (EQQQ…QSEP). The span at 456 to 465 (VDESTSNASE) shows a compositional bias: polar residues. Composition is skewed to low complexity over residues 487–512 (RASI…SLRA) and 530–553 (DGSG…DATS). Residues 554–567 (QSTRQNDSHSSTNM) show a composition bias toward polar residues. Pro residues predominate over residues 587–600 (PPNPFAPKRPPQHP). The span at 693–702 (NEPKRVKVDS) shows a compositional bias: basic and acidic residues.

Belongs to the MEF2 family. As to quaternary structure, interacts with MAPK MPS1.

The protein localises to the nucleus. Transcription factor acting downstream of the MPS1 MAP kinase (MAPK) cascade during conidiation and plant infection. Required for overcoming plant defense responses and the differentiation of secondary infectious hyphae in live plant cells. The chain is MADS-box MEF2 type transcription factor MIG1 from Pyricularia oryzae (Rice blast fungus).